Here is a 246-residue protein sequence, read N- to C-terminus: Homeobox protein SIX6 (246 aa).

Residues 126–186 (WDGEQKTHCF…KNRRQRDRAA (61 aa)) constitute a DNA-binding region (homeobox). Polar residues predominate over residues 195–204 (QVLAQGSGRS). A disordered region spans residues 195-246 (QVLAQGSGRSLQAEEESGGEAGGAASSPAVSLSSKAATSAISITSSDSECDI). Over residues 217–246 (GAASSPAVSLSSKAATSAISITSSDSECDI) the composition is skewed to low complexity.

It belongs to the SIX/Sine oculis homeobox family. In terms of tissue distribution, in the developing embryo, expressed in the anterior head-fold, the anterior neural plate and optic vesicle. At later stages expression is maintained in the eye, while brain expression becomes limited. Not expressed in the lens placode.

Its subcellular location is the nucleus. May be involved in eye development. The chain is Homeobox protein SIX6 (SIX6) from Gallus gallus (Chicken).